Here is a 100-residue protein sequence, read N- to C-terminus: Urease subunit gamma (100 aa).

It belongs to the urease gamma subunit family. Heterotrimer of UreA (gamma), UreB (beta) and UreC (alpha) subunits. Three heterotrimers associate to form the active enzyme.

It is found in the cytoplasm. The catalysed reaction is urea + 2 H2O + H(+) = hydrogencarbonate + 2 NH4(+). It functions in the pathway nitrogen metabolism; urea degradation; CO(2) and NH(3) from urea (urease route): step 1/1. This is Urease subunit gamma from Jannaschia sp. (strain CCS1).